Reading from the N-terminus, the 63-residue chain is Large ribosomal subunit protein bL35 (63 aa).

It belongs to the bacterial ribosomal protein bL35 family.

This Thermobifida fusca (strain YX) protein is Large ribosomal subunit protein bL35.